A 69-amino-acid chain; its full sequence is Pleurain-A1 (69 aa).

The first 18 residues, 1–18 (MFTLKKTLLLLFFLGTIS), serve as a signal peptide directing secretion. The propeptide occupies 19–43 (ISLCKQERDADEDDGRKMTEEEVKR). The cysteines at positions 63 and 69 are disulfide-linked.

In terms of tissue distribution, expressed by the skin glands.

It localises to the secreted. Its function is as follows. Antimicrobial peptide. Has activity against the Gram-positive bacterium S.aureus ATCC2592 (MIC=15 ug/ml), the Gram-negative bacteria E.coli ATCC25922 (MIC=60 ug/ml), B.dysenteriae (MIC=120 ug/ml), H.pylori NTCT11637 (MIC=30 ug/ml), and the fungus C.albicans ATCC2002 (MIC=30 ug/ml). Has little hemolytic activity on rabbit red blood cells. The polypeptide is Pleurain-A1 (Nidirana pleuraden (Yunnan pond frog)).